The primary structure comprises 179 residues: Large ribosomal subunit protein uL5 (179 aa).

It belongs to the universal ribosomal protein uL5 family. In terms of assembly, part of the 50S ribosomal subunit; part of the 5S rRNA/L5/L18/L25 subcomplex. Contacts the 5S rRNA and the P site tRNA. Forms a bridge to the 30S subunit in the 70S ribosome.

Its function is as follows. This is one of the proteins that bind and probably mediate the attachment of the 5S RNA into the large ribosomal subunit, where it forms part of the central protuberance. In the 70S ribosome it contacts protein S13 of the 30S subunit (bridge B1b), connecting the 2 subunits; this bridge is implicated in subunit movement. Contacts the P site tRNA; the 5S rRNA and some of its associated proteins might help stabilize positioning of ribosome-bound tRNAs. The sequence is that of Large ribosomal subunit protein uL5 from Herpetosiphon aurantiacus (strain ATCC 23779 / DSM 785 / 114-95).